The chain runs to 229 residues: MAKKSKQMLAALEKVDSTKAYSVEEAVALVKETNFAKFDASVEVAYNLNIDVRKADQQIRGAMVLPNGTGKTQRVLVFARGAKAEEAKAAGADFVGEDDLVAKINGGWLDFDVVIATPDMMAIVGRLGRVLGPRNLMPNPKTGTVTMDVAKAVEESKGGKITYRADKAGNVQALIGKVSFDADKLVENFKAFHDVMAKAKPATAKGTYMANVSITSTQGVGIKVDPNSL.

It belongs to the universal ribosomal protein uL1 family. As to quaternary structure, part of the 50S ribosomal subunit.

Binds directly to 23S rRNA. The L1 stalk is quite mobile in the ribosome, and is involved in E site tRNA release. Its function is as follows. Protein L1 is also a translational repressor protein, it controls the translation of the L11 operon by binding to its mRNA. This is Large ribosomal subunit protein uL1 from Streptococcus pyogenes serotype M3 (strain SSI-1).